The sequence spans 130 residues: Small ribosomal subunit protein uS11c (130 aa).

The protein belongs to the universal ribosomal protein uS11 family. As to quaternary structure, part of the 30S ribosomal subunit.

It is found in the plastid. The protein localises to the chloroplast. The chain is Small ribosomal subunit protein uS11c from Mesostigma viride (Green alga).